The primary structure comprises 339 residues: D-erythrose-4-phosphate dehydrogenase (339 aa).

Residue 11–12 (RI) coordinates NAD(+). Residues 158 to 160 (SCT), Arg204, 217 to 218 (TK), and Arg240 each bind substrate. The Nucleophile role is filled by Cys159. NAD(+) is bound at residue Asn322.

This sequence belongs to the glyceraldehyde-3-phosphate dehydrogenase family. Epd subfamily. Homotetramer.

The protein localises to the cytoplasm. It carries out the reaction D-erythrose 4-phosphate + NAD(+) + H2O = 4-phospho-D-erythronate + NADH + 2 H(+). It participates in cofactor biosynthesis; pyridoxine 5'-phosphate biosynthesis; pyridoxine 5'-phosphate from D-erythrose 4-phosphate: step 1/5. Functionally, catalyzes the NAD-dependent conversion of D-erythrose 4-phosphate to 4-phosphoerythronate. The protein is D-erythrose-4-phosphate dehydrogenase of Aliivibrio fischeri (strain ATCC 700601 / ES114) (Vibrio fischeri).